The chain runs to 89 residues: Microcin N (89 aa).

The N-terminal stretch at 1–15 (MRELDREELNCVGGA) is a signal peptide.

This sequence belongs to the class IIa microcin family. Mass spectrometry suggests 3 of the 4 Met residues of the mature peptide are oxidized.

The protein localises to the secreted. In terms of biological role, active against E.coli and Salmonella, but not Listeria or Campylobacter. Channel-forming microcin. Probably neutralized by its immunity protein McnI. The polypeptide is Microcin N (Escherichia coli).